We begin with the raw amino-acid sequence, 325 residues long: Heat-inducible transcription repressor HrcA (325 aa).

Belongs to the HrcA family.

Its function is as follows. Negative regulator of class I heat shock genes (grpE-dnaK-dnaJ and groELS operons). Prevents heat-shock induction of these operons. The polypeptide is Heat-inducible transcription repressor HrcA (Staphylococcus aureus (strain MRSA252)).